We begin with the raw amino-acid sequence, 333 residues long: Probable 4-hydroxyproline 2-epimerase (333 aa).

Catalysis depends on Cys-90, which acts as the Proton acceptor. Residues 91–92 (GH), His-223, and Asp-249 contribute to the substrate site. The Proton donor role is filled by Cys-253. 254 to 255 (GT) is a substrate binding site.

Belongs to the proline racemase family.

It catalyses the reaction trans-4-hydroxy-L-proline = cis-4-hydroxy-D-proline. In terms of biological role, likely catalyzes the epimerization of trans-4-hydroxy-L-proline (t4LHyp) to cis-4-hydroxy-D-proline (c4DHyp). May be involved in the degradation pathway that converts t4LHyp to alpha-ketoglutarate, which would allow R.meliloti to grow on t4LHyp as a sole carbon source. This is Probable 4-hydroxyproline 2-epimerase from Rhizobium meliloti (strain 1021) (Ensifer meliloti).